The following is a 213-amino-acid chain: rRNA N(6)-adenosine-methyltransferase Mettl5 (213 aa).

S-adenosyl-L-methionine is bound by residues Q28, T31, G59, C62, and 108 to 109; that span reads DV.

This sequence belongs to the methyltransferase superfamily. PrmA family. Heterodimer; heterodimerizes with Trmt112. In terms of tissue distribution, enriched in the brain.

The protein localises to the cytoplasm. The enzyme catalyses adenosine in rRNA + S-adenosyl-L-methionine = N(6)-methyladenosine in rRNA + S-adenosyl-L-homocysteine + H(+). Its function is as follows. Catalytic subunit of a heterodimer with Trmt112, which specifically methylates the 6th position of adenine in 18S rRNA. The protein is rRNA N(6)-adenosine-methyltransferase Mettl5 of Drosophila melanogaster (Fruit fly).